The primary structure comprises 177 residues: Large ribosomal subunit protein uL10 (177 aa).

This sequence belongs to the universal ribosomal protein uL10 family. As to quaternary structure, part of the ribosomal stalk of the 50S ribosomal subunit. The N-terminus interacts with L11 and the large rRNA to form the base of the stalk. The C-terminus forms an elongated spine to which L12 dimers bind in a sequential fashion forming a multimeric L10(L12)X complex.

Functionally, forms part of the ribosomal stalk, playing a central role in the interaction of the ribosome with GTP-bound translation factors. The chain is Large ribosomal subunit protein uL10 from Legionella pneumophila (strain Corby).